Consider the following 555-residue polypeptide: Zinc transporter ZIP5 (555 aa).

The Extracellular segment spans residues 1–242 (MGGQTVWMTL…HSQASKTSEG (242 aa)). The tract at residues 108-148 (KHPSQSISHSHSHEDHHPSQGTTNSPPLRESLDAKSALSGS) is disordered. A helical membrane pass occupies residues 243 to 263 (FLIALGWASLALLVISLPSLV). Residues 264–314 (ALGMAPLLQPSVLQVFLCPMAGMAVGTLCGDALLHLMPHAIFSQHTDHQNA) lie on the Cytoplasmic side of the membrane. A helical membrane pass occupies residues 315-335 (VFKGLSVLGGLYLLFIFESLL). At 336 to 408 (GLKQHFKNLK…DGIHNLTDGL (73 aa)) the chain is on the extracellular side. Polar residues predominate over residues 363-374 (TSSANQNESSGH). Residues 363–383 (TSSANQNESSGHGHSHGQAEP) are disordered. Residues 409-429 (AIGVAFSQSLTGGFSTAIAVF) form a helical membrane-spanning segment. The Cytoplasmic portion of the chain corresponds to 430–452 (CHELPHELGDLAVLLSAGWPVRR). The chain crosses the membrane as a helical span at residues 453-473 (LLVFSGLSALLGFVGVLAGSA). The Extracellular segment spans residues 474-482 (LGNHWASHS). A helical transmembrane segment spans residues 483 to 503 (PWILTLTAGVFLYVALADMMP). Residues 504-518 (EMLHGACGSVSPLKR) lie on the Cytoplasmic side of the membrane. A helical membrane pass occupies residues 519-539 (FLLQALGLLTGGAIMLCIALF). The Extracellular portion of the chain corresponds to 540–555 (EDHIAVSLGENSLGEN).

The protein belongs to the ZIP transporter (TC 2.A.5) family.

Its subcellular location is the basolateral cell membrane. It catalyses the reaction Zn(2+)(in) = Zn(2+)(out). Uniporter that transports zinc(2+) into polarized cells of enterocytes, pancreatic acinar and endoderm cells across the basolateral membrane and participates, notably, in zinc excretion from the intestine by the uptake of zinc from the blood into the intestine. The transport mechanism is temperature- and concentration-dependent and saturable. Mediates zinc homeostasis that is essential for venous angiogenesis. The protein is Zinc transporter ZIP5 (slc39a5) of Danio rerio (Zebrafish).